The following is a 142-amino-acid chain: Hemoglobin subunit alpha (142 aa).

Residues 2–142 (VLSAADKTNV…VSTVLTSKYR (141 aa)) enclose the Globin domain. Serine 4 carries the post-translational modification Phosphoserine. Lysine 8 carries the N6-succinyllysine modification. Position 9 is a phosphothreonine (threonine 9). Lysine 12 carries the post-translational modification N6-succinyllysine. N6-acetyllysine; alternate is present on lysine 17. Residue lysine 17 is modified to N6-succinyllysine; alternate. Lysine 41 carries the post-translational modification N6-succinyllysine. At serine 50 the chain carries Phosphoserine. Histidine 59 contacts O2. Histidine 88 serves as a coordination point for heme b. The residue at position 103 (serine 103) is a Phosphoserine. The residue at position 109 (threonine 109) is a Phosphothreonine. Residues serine 125 and serine 132 each carry the phosphoserine modification. 2 positions are modified to phosphothreonine: threonine 135 and threonine 138. Serine 139 is modified (phosphoserine).

The protein belongs to the globin family. Heterotetramer of two alpha chains and two beta chains. As to expression, red blood cells.

In terms of biological role, involved in oxygen transport from the lung to the various peripheral tissues. Hemopressin acts as an antagonist peptide of the cannabinoid receptor CNR1. Hemopressin-binding efficiently blocks cannabinoid receptor CNR1 and subsequent signaling. The chain is Hemoglobin subunit alpha (HBA) from Equus przewalskii (Przewalski's horse).